We begin with the raw amino-acid sequence, 151 residues long: Probable cGMP 3',5'-cyclic phosphodiesterase subunit delta (151 aa).

Belongs to the PDE6D/unc-119 family. Interacts with Pde6.

It is found in the nucleus. The protein resides in the cytoplasm. This Culex quinquefasciatus (Southern house mosquito) protein is Probable cGMP 3',5'-cyclic phosphodiesterase subunit delta.